Here is a 425-residue protein sequence, read N- to C-terminus: Enolase (425 aa).

Gln161 contacts (2R)-2-phosphoglycerate. The active-site Proton donor is Glu203. Asp240, Glu283, and Asp310 together coordinate Mg(2+). (2R)-2-phosphoglycerate-binding residues include Lys335, Arg364, Ser365, and Lys386. The Proton acceptor role is filled by Lys335.

The protein belongs to the enolase family. As to quaternary structure, component of the RNA degradosome, a multiprotein complex involved in RNA processing and mRNA degradation. Requires Mg(2+) as cofactor.

The protein localises to the cytoplasm. Its subcellular location is the secreted. It localises to the cell surface. The enzyme catalyses (2R)-2-phosphoglycerate = phosphoenolpyruvate + H2O. It functions in the pathway carbohydrate degradation; glycolysis; pyruvate from D-glyceraldehyde 3-phosphate: step 4/5. Functionally, catalyzes the reversible conversion of 2-phosphoglycerate (2-PG) into phosphoenolpyruvate (PEP). It is essential for the degradation of carbohydrates via glycolysis. The protein is Enolase of Ruthia magnifica subsp. Calyptogena magnifica.